A 638-amino-acid chain; its full sequence is Terrein cluster-specific transcription factor terR (638 aa).

The segment at residues 50–76 is a DNA-binding region (zn(2)-C6 fungal-type); the sequence is CDMCKSKKVRCDGGTPCSYCNLHDLRC.

The protein resides in the nucleus. Functionally, transcription factor that regulates specifically the terrein biosynthesis gene cluster. Recognizes CGG direct repeat consensus sequences in the terrein cluster forming the high affinity consensus motif TCGGHHWYHCGGH. This is Terrein cluster-specific transcription factor terR from Aspergillus terreus (strain NIH 2624 / FGSC A1156).